We begin with the raw amino-acid sequence, 2140 residues long: Dedicator of cytokinesis protein 7 (2140 aa).

Ser-30, Ser-180, and Ser-182 each carry phosphoserine. The interval 138–183 is disordered; it reads FNPNTLDKQKERQKGLPKQVFESDEAPDGNSYQDDQDDLKRRSMSI. The stretch at 365-395 forms a coiled coil; it reads FKEADATKNKEKLEKLKSQADQFCQRLGKYR. Lys-381 is modified (N6-methyllysine). The residue at position 450 (Thr-450) is a Phosphothreonine. The residue at position 452 (Ser-452) is a Phosphoserine. The C2 DOCK-type domain maps to 561 to 727; that stretch reads RNLLYIYPQS…GVFNVEVVAV (167 aa). Residues Ser-862, Ser-864, Ser-882, Ser-888, Ser-896, Ser-900, and Ser-905 each carry the phosphoserine modification. Positions 888–901 are enriched in low complexity; it reads SLNLNRSRSLSNSN. The tract at residues 888–971 is disordered; sequence SLNLNRSRSL…MSSHTETSSF (84 aa). Phosphothreonine is present on residues Thr-907 and Thr-909. 14 positions are modified to phosphoserine: Ser-910, Ser-929, Ser-964, Ser-1383, Lys-1390, Ala-1394, Glu-1398, Tyr-1421, Ser-1425, Arg-1429, Ser-1430, Ser-1432, Ser-1434, and Ser-1438. Polar residues predominate over residues 943 to 971; that stretch reads SNPSPSAESTQAMDRSCNRMSSHTETSSF. In terms of domain architecture, DOCKER spans 1678-2114; the sequence is KGYQTSPDLR…LQPLINRKIP (437 aa). An N6-acetyllysine modification is found at Lys-1962. The stretch at 2086 to 2112 forms a coiled coil; that stretch reads DQKEYQRELERNYHRLKEALQPLINRK. Position 2129 is a phosphoserine (Ser-2129).

Belongs to the DOCK family. Component of the DOCK7-induced septin displacement/DISP complex, at least composed of DOCK7, LRCH3 and MYO6. Interacts with TSC1. Interacts with nucleotide-free RAC1 and RAC3. Interacts with TACC3 and CRY1. Interacts with NOD2. In terms of tissue distribution, widely expressed.

It localises to the cell projection. Its subcellular location is the axon. Its function is as follows. Functions as a guanine nucleotide exchange factor (GEF), which activates Rac1 and Rac3 Rho small GTPases by exchanging bound GDP for free GTP. Does not have a GEF activity for CDC42. Required for STMN1 'Ser-15' phosphorylation during axon formation and consequently for neuronal polarization. As part of the DISP complex, may regulate the association of septins with actin and thereby regulate the actin cytoskeleton. Has a role in pigmentation. Involved in the regulation of cortical neurogenesis through the control of radial glial cells (RGCs) proliferation versus differentiation; negatively regulates the basal-to-apical interkinetic nuclear migration of RGCs by antagonizing the microtubule growth-promoting function of TACC3. The protein is Dedicator of cytokinesis protein 7 (DOCK7) of Homo sapiens (Human).